The primary structure comprises 1257 residues: Elongation factor 2 (1257 aa).

Positions 273 to 402 (LAGLMFGDGC…LQLLLQKFDV (130 aa)) constitute a DOD-type homing endonuclease domain. Residues 541 to 782 (VEEHHNFAAE…MVVKHLPDPV (242 aa)) enclose the tr-type G domain. Residues 616–620 (DTPGH) and 670–673 (NKVD) each bind GTP. His1120 carries the diphthamide modification. Basic and acidic residues predominate over residues 1237–1250 (ERKGLKPEPPKPED). Positions 1237–1257 (ERKGLKPEPPKPEDYIEDYGG) are disordered.

Belongs to the TRAFAC class translation factor GTPase superfamily. Classic translation factor GTPase family. EF-G/EF-2 subfamily. In terms of processing, this protein undergoes a protein self splicing that involves a post-translational excision of the intervening region (intein) followed by peptide ligation.

The protein localises to the cytoplasm. Functionally, catalyzes the GTP-dependent ribosomal translocation step during translation elongation. During this step, the ribosome changes from the pre-translocational (PRE) to the post-translocational (POST) state as the newly formed A-site-bound peptidyl-tRNA and P-site-bound deacylated tRNA move to the P and E sites, respectively. Catalyzes the coordinated movement of the two tRNA molecules, the mRNA and conformational changes in the ribosome. In Methanopyrus kandleri (strain AV19 / DSM 6324 / JCM 9639 / NBRC 100938), this protein is Elongation factor 2.